The sequence spans 191 residues: Dephospho-CoA kinase (191 aa).

Positions 3 to 191 (AIGITGSYAS…KLIKNLECQV (189 aa)) constitute a DPCK domain. 11 to 16 (ASGKTF) contacts ATP.

This sequence belongs to the CoaE family.

The protein resides in the cytoplasm. It catalyses the reaction 3'-dephospho-CoA + ATP = ADP + CoA + H(+). It functions in the pathway cofactor biosynthesis; coenzyme A biosynthesis; CoA from (R)-pantothenate: step 5/5. Functionally, catalyzes the phosphorylation of the 3'-hydroxyl group of dephosphocoenzyme A to form coenzyme A. The sequence is that of Dephospho-CoA kinase from Rickettsia typhi (strain ATCC VR-144 / Wilmington).